A 356-amino-acid chain; its full sequence is Dynein axonemal heavy chain 12 (356 aa).

6 ANK repeats span residues D17–V46, S50–R81, S82–F111, H124–Q153, D154–Y183, and C185–L218. Residues W290–D345 enclose the SOCS box domain.

The protein belongs to the dynein heavy chain family. As to quaternary structure, consists of at least two heavy chains and a number of intermediate and light chains.

It is found in the cytoplasm. It localises to the cytoskeleton. The protein localises to the cilium axoneme. The protein operates within protein modification; protein ubiquitination. Its function is as follows. Force generating protein of respiratory cilia. Produces force towards the minus ends of microtubules. Dynein has ATPase activity; the force-producing power stroke is thought to occur on release of ADP. Involved in sperm motility; implicated in sperm flagellar assembly. In terms of biological role, may be a substrate-recognition component of a SCF-like ECS (Elongin-Cullin-SOCS-box protein) E3 ubiquitin-protein ligase complex which mediates the ubiquitination and subsequent proteasomal degradation of target proteins. The chain is Dynein axonemal heavy chain 12 (DNAH12) from Bos taurus (Bovine).